The following is a 102-amino-acid chain: Large ribosomal subunit protein bL21 (102 aa).

It belongs to the bacterial ribosomal protein bL21 family. In terms of assembly, part of the 50S ribosomal subunit. Contacts protein L20.

In terms of biological role, this protein binds to 23S rRNA in the presence of protein L20. The polypeptide is Large ribosomal subunit protein bL21 (Sulfurimonas denitrificans (strain ATCC 33889 / DSM 1251) (Thiomicrospira denitrificans (strain ATCC 33889 / DSM 1251))).